The chain runs to 295 residues: Release factor glutamine methyltransferase (295 aa).

Residues 127 to 131 (GTGSG), Asp-150, Phe-179, and Asn-195 each bind S-adenosyl-L-methionine. 195 to 198 (NPPY) contacts substrate.

This sequence belongs to the protein N5-glutamine methyltransferase family. PrmC subfamily.

It carries out the reaction L-glutaminyl-[peptide chain release factor] + S-adenosyl-L-methionine = N(5)-methyl-L-glutaminyl-[peptide chain release factor] + S-adenosyl-L-homocysteine + H(+). Its function is as follows. Methylates the class 1 translation termination release factors RF1/PrfA and RF2/PrfB on the glutamine residue of the universally conserved GGQ motif. In Nitratidesulfovibrio vulgaris (strain ATCC 29579 / DSM 644 / CCUG 34227 / NCIMB 8303 / VKM B-1760 / Hildenborough) (Desulfovibrio vulgaris), this protein is Release factor glutamine methyltransferase.